The sequence spans 229 residues: Type III pantothenate kinase (229 aa).

6 to 13 (NIGNSRQH) is an ATP binding site. Substrate-binding positions include Tyr77 and 81-84 (GIDR). Asp83 serves as the catalytic Proton acceptor. A K(+)-binding site is contributed by Asp103. Thr106 contributes to the ATP binding site. Thr159 is a substrate binding site.

The protein belongs to the type III pantothenate kinase family. As to quaternary structure, homodimer. The cofactor is NH4(+). It depends on K(+) as a cofactor.

It localises to the cytoplasm. It catalyses the reaction (R)-pantothenate + ATP = (R)-4'-phosphopantothenate + ADP + H(+). It participates in cofactor biosynthesis; coenzyme A biosynthesis; CoA from (R)-pantothenate: step 1/5. In terms of biological role, catalyzes the phosphorylation of pantothenate (Pan), the first step in CoA biosynthesis. In Gloeobacter violaceus (strain ATCC 29082 / PCC 7421), this protein is Type III pantothenate kinase.